Here is a 109-residue protein sequence, read N- to C-terminus: MEDRVEISLLMDFYGPLLTEKQSEIMQWYYNDDLSLAEIAELNQTSRQAIHDLIKRCYKQLLSYESKLNLLQKSINRKKEIMNFLEHLKNKYSIDDEDIIKYKEKLENL.

It belongs to the UPF0122 family.

In terms of biological role, might take part in the signal recognition particle (SRP) pathway. This is inferred from the conservation of its genetic proximity to ftsY/ffh. May be a regulatory protein. This chain is UPF0122 protein Cbei_1174, found in Clostridium beijerinckii (strain ATCC 51743 / NCIMB 8052) (Clostridium acetobutylicum).